A 1398-amino-acid chain; its full sequence is DNA topoisomerase 2 (1398 aa).

Residues Asn69, Asn103, 131-133, and 144-151 contribute to the ATP site; these read SDN and GRNGFGAK. A disordered region spans residues 260 to 317; sequence NSNDNKNNKGQNDNNNNNNNNNDENANQNNDNLDVSLSNEPADGTPTKNNNNNNNNND. Low complexity predominate over residues 267-291; sequence NKGQNDNNNNNNNNNDENANQNNDN. 411-413 serves as a coordination point for ATP; it reads QTK. The region spanning 493–608 is the Toprim domain; sequence CTLILTEGDS…SLLKHKGFLS (116 aa). Mg(2+)-binding residues include Glu499, Asp577, and Asp579. A Topo IIA-type catalytic domain is found at 739–1191; that stretch reads IPNIMDGWKP…TVETMWLKDI (453 aa). The active-site O-(5'-phospho-DNA)-tyrosine intermediate is the Tyr830. The interval 1012 to 1021 is interaction with DNA; that stretch reads KLKSTLTTTN. 2 disordered regions span residues 1214-1250 and 1262-1361; these read KFKV…SDSS and NTNK…NSSI. Residues 1262 to 1276 are compositionally biased toward low complexity; that stretch reads NTNKKTTTSSNNVNN. Composition is skewed to polar residues over residues 1287–1300 and 1348–1357; these read LNSN…SVSK and DSTNDNNSEL.

The protein belongs to the type II topoisomerase family. In terms of assembly, homodimer. Mg(2+) serves as cofactor. The cofactor is Mn(2+). Ca(2+) is required as a cofactor.

It localises to the nucleus. The catalysed reaction is ATP-dependent breakage, passage and rejoining of double-stranded DNA.. Functionally, control of topological states of DNA by transient breakage and subsequent rejoining of DNA strands. Topoisomerase II makes double-strand breaks. The polypeptide is DNA topoisomerase 2 (TOP2) (Plasmodium falciparum (isolate K1 / Thailand)).